Reading from the N-terminus, the 49-residue chain is uncharacterized protein (49 aa).

A helical transmembrane segment spans residues Pro-31–Phe-48.

It localises to the membrane. This is an uncharacterized protein from Saccharomyces cerevisiae (strain ATCC 204508 / S288c) (Baker's yeast).